An 83-amino-acid polypeptide reads, in one-letter code: Small ribosomal subunit protein uS17 (83 aa).

This sequence belongs to the universal ribosomal protein uS17 family. Part of the 30S ribosomal subunit.

Its function is as follows. One of the primary rRNA binding proteins, it binds specifically to the 5'-end of 16S ribosomal RNA. The polypeptide is Small ribosomal subunit protein uS17 (Francisella philomiragia subsp. philomiragia (strain ATCC 25017 / CCUG 19701 / FSC 153 / O#319-036)).